Consider the following 376-residue polypeptide: Dihydroorotate dehydrogenase (quinone) (376 aa).

Residues 74 to 78 (AGFDK) and T98 each bind FMN. A substrate-binding site is contributed by K78. Substrate is bound at residue 123-127 (NHMGF). 2 residues coordinate FMN: N152 and N185. N185 provides a ligand contact to substrate. Residue S188 is the Nucleophile of the active site. N190 contributes to the substrate binding site. 2 residues coordinate FMN: K223 and T251. 252 to 253 (NT) contacts substrate. FMN-binding positions include G280, G309, and 330 to 331 (YT). The tract at residues 352 to 376 (RNPAPSSPERMPTGIQSGRKIVMDP) is disordered.

The protein belongs to the dihydroorotate dehydrogenase family. Type 2 subfamily. Monomer. FMN is required as a cofactor.

It localises to the cell membrane. It catalyses the reaction (S)-dihydroorotate + a quinone = orotate + a quinol. The protein operates within pyrimidine metabolism; UMP biosynthesis via de novo pathway; orotate from (S)-dihydroorotate (quinone route): step 1/1. In terms of biological role, catalyzes the conversion of dihydroorotate to orotate with quinone as electron acceptor. The chain is Dihydroorotate dehydrogenase (quinone) from Synechococcus sp. (strain JA-3-3Ab) (Cyanobacteria bacterium Yellowstone A-Prime).